The primary structure comprises 383 residues: Alkanesulfonate monooxygenase (383 aa).

The protein belongs to the SsuD family. Homotetramer.

The enzyme catalyses an alkanesulfonate + FMNH2 + O2 = an aldehyde + FMN + sulfite + H2O + 2 H(+). In terms of biological role, catalyzes the desulfonation of aliphatic sulfonates. This Erwinia pyrifoliae (strain DSM 12163 / CIP 106111 / Ep16/96) protein is Alkanesulfonate monooxygenase.